The following is a 201-amino-acid chain: Large ribosomal subunit protein uL4 (201 aa).

A disordered region spans residues 44–68; it reads KAQKTRSEVAGTTKKSKKQKGGGAR.

This sequence belongs to the universal ribosomal protein uL4 family. In terms of assembly, part of the 50S ribosomal subunit.

In terms of biological role, one of the primary rRNA binding proteins, this protein initially binds near the 5'-end of the 23S rRNA. It is important during the early stages of 50S assembly. It makes multiple contacts with different domains of the 23S rRNA in the assembled 50S subunit and ribosome. Its function is as follows. Forms part of the polypeptide exit tunnel. This Xanthomonas campestris pv. campestris (strain 8004) protein is Large ribosomal subunit protein uL4.